The sequence spans 316 residues: Homoserine kinase (316 aa).

97–107 serves as a coordination point for ATP; that stretch reads PHSRGLGSSAA.

This sequence belongs to the GHMP kinase family. Homoserine kinase subfamily.

Its subcellular location is the cytoplasm. The catalysed reaction is L-homoserine + ATP = O-phospho-L-homoserine + ADP + H(+). It functions in the pathway amino-acid biosynthesis; L-threonine biosynthesis; L-threonine from L-aspartate: step 4/5. Functionally, catalyzes the ATP-dependent phosphorylation of L-homoserine to L-homoserine phosphate. This is Homoserine kinase from Mycobacterium tuberculosis (strain ATCC 25618 / H37Rv).